The sequence spans 463 residues: Glutamate--tRNA ligase 1 (463 aa).

Positions 10 to 20 (PSPTGYLHIGG) match the 'HIGH' region motif. The 'KMSKS' region signature appears at 238–242 (KLSKR). Lys-241 lines the ATP pocket.

The protein belongs to the class-I aminoacyl-tRNA synthetase family. Glutamate--tRNA ligase type 1 subfamily. Monomer.

Its subcellular location is the cytoplasm. The enzyme catalyses tRNA(Glu) + L-glutamate + ATP = L-glutamyl-tRNA(Glu) + AMP + diphosphate. Catalyzes the attachment of glutamate to tRNA(Glu) in a two-step reaction: glutamate is first activated by ATP to form Glu-AMP and then transferred to the acceptor end of tRNA(Glu). The sequence is that of Glutamate--tRNA ligase 1 from Helicobacter pylori (strain ATCC 700392 / 26695) (Campylobacter pylori).